The following is a 456-amino-acid chain: Probable tRNA(Ile)-lysidine synthase (456 aa).

30-35 (SGGVDS) is a binding site for ATP.

It belongs to the tRNA(Ile)-lysidine synthase family.

The protein resides in the cytoplasm. The catalysed reaction is cytidine(34) in tRNA(Ile2) + L-lysine + ATP = lysidine(34) in tRNA(Ile2) + AMP + diphosphate + H(+). Functionally, ligates lysine onto the cytidine present at position 34 of the AUA codon-specific tRNA(Ile) that contains the anticodon CAU, in an ATP-dependent manner. Cytidine is converted to lysidine, thus changing the amino acid specificity of the tRNA from methionine to isoleucine. The chain is Probable tRNA(Ile)-lysidine synthase from Schizosaccharomyces pombe (strain 972 / ATCC 24843) (Fission yeast).